Consider the following 479-residue polypeptide: UDP-glucose flavonoid 3-O-glucosyltransferase 6 (479 aa).

Residue His17 is the Proton acceptor of the active site. His17 lines the an anthocyanidin pocket. Asp121 (charge relay) is an active-site residue. Residues Thr143, Ala354, Gln356, His371, Trp374, Asn375, Ser376, and Glu379 each coordinate UDP-alpha-D-glucose. Ala394 serves as a coordination point for an anthocyanidin. The UDP-alpha-D-glucose site is built by Glu395 and Gln396. Residues 454 to 479 (MSRKALEEDGSSYSSLGRFLDQIQTS) are disordered.

The protein belongs to the UDP-glycosyltransferase family. As to expression, strongly expressed in achenes, with lower expression levels detected in receptacles.

It carries out the reaction a flavonol + UDP-alpha-D-glucose = a flavonol 3-O-beta-D-glucoside + UDP + H(+). Broad spectrum multifunctional glucosyltransferase. Catalyzes the formation of flavonol 3-O-glucosides during fruit ripening. Accepted substrates include several flavonoids, hydroxycoumarins and beta-naphthols. Uses UDP-Glc as a sugar donor, but not UDP-Gal or UDP-GlcUA. May also be involved in detoxification of xenobiotics. This is UDP-glucose flavonoid 3-O-glucosyltransferase 6 from Fragaria ananassa (Strawberry).